The sequence spans 147 residues: Myoglobin (147 aa).

A Globin domain is found at 2–141 (ADFDAVLKFW…VIADLEANYK (140 aa)). Nitrite is bound at residue histidine 60. Histidine 60 contacts O2. Histidine 89 contacts heme b.

Belongs to the globin family. Monomeric.

The protein resides in the cytoplasm. It localises to the sarcoplasm. The enzyme catalyses Fe(III)-heme b-[protein] + nitric oxide + H2O = Fe(II)-heme b-[protein] + nitrite + 2 H(+). It carries out the reaction H2O2 + AH2 = A + 2 H2O. Monomeric heme protein which primary function is to store oxygen and facilitate its diffusion within muscle tissues. Reversibly binds oxygen through a pentacoordinated heme iron and enables its timely and efficient release as needed during periods of heightened demand. Depending on the oxidative conditions of tissues and cells, and in addition to its ability to bind oxygen, it also has a nitrite reductase activity whereby it regulates the production of bioactive nitric oxide. Under stress conditions, like hypoxia and anoxia, it also protects cells against reactive oxygen species thanks to its pseudoperoxidase activity. The polypeptide is Myoglobin (mb) (Sarda chiliensis (Pacific bonito)).